The chain runs to 251 residues: MSHSQEKIALITGASSQGDIGTAICRKLASQGIHIFFTHWNSDTAWIEEFQQEILRMGVRCEAMKIDLSDAHAAFTIHEKISDKLGYPSILINNAAHSASDNYVSLDAKSLDEHYAVNMRSNFLLCVEFARRFKKSNLISGRIINMTSGQDLGPLPGELAYAATKGAISAFTRSLSQELAPLGITVNAVNPGPTDSTWMTDEIRNFLSPKFPMGRIGTPDDAARMIAFLASDEAEWITGQIIHSEGGFIRG.

12–21 is a binding site for NADP(+); it reads TGASSQGDIG. Ser-148 is a substrate binding site. Tyr-161 acts as the Proton acceptor in catalysis.

It belongs to the short-chain dehydrogenases/reductases (SDR) family.

This is an uncharacterized protein from Bacillus subtilis (strain 168).